We begin with the raw amino-acid sequence, 172 residues long: Shikimate kinase (172 aa).

11 to 16 contributes to the ATP binding site; sequence GSGKTT. Thr-15 contacts Mg(2+). Substrate is bound by residues Asp-33, Arg-57, and Gly-79. Arg-117 contacts ATP. Residue Arg-136 coordinates substrate.

The protein belongs to the shikimate kinase family. Monomer. The cofactor is Mg(2+).

The protein localises to the cytoplasm. The catalysed reaction is shikimate + ATP = 3-phosphoshikimate + ADP + H(+). It participates in metabolic intermediate biosynthesis; chorismate biosynthesis; chorismate from D-erythrose 4-phosphate and phosphoenolpyruvate: step 5/7. Its function is as follows. Catalyzes the specific phosphorylation of the 3-hydroxyl group of shikimic acid using ATP as a cosubstrate. The protein is Shikimate kinase of Caldicellulosiruptor saccharolyticus (strain ATCC 43494 / DSM 8903 / Tp8T 6331).